A 476-amino-acid polypeptide reads, in one-letter code: Cysteine--tRNA ligase (476 aa).

Cys36 lines the Zn(2+) pocket. The 'HIGH' region signature appears at 38–48; the sequence is PTVYDYAHIGN. Residues Cys221, His246, and Glu250 each coordinate Zn(2+). Residues 278–282 carry the 'KMSKS' region motif; that stretch reads KMSKS. An ATP-binding site is contributed by Lys281.

Belongs to the class-I aminoacyl-tRNA synthetase family. As to quaternary structure, monomer. Zn(2+) is required as a cofactor.

The protein resides in the cytoplasm. The enzyme catalyses tRNA(Cys) + L-cysteine + ATP = L-cysteinyl-tRNA(Cys) + AMP + diphosphate. The protein is Cysteine--tRNA ligase of Chlamydia abortus (strain DSM 27085 / S26/3) (Chlamydophila abortus).